A 426-amino-acid chain; its full sequence is UPF0597 protein CLI_1810 (426 aa).

The protein belongs to the UPF0597 family.

The sequence is that of UPF0597 protein CLI_1810 from Clostridium botulinum (strain Langeland / NCTC 10281 / Type F).